The primary structure comprises 502 residues: Neuronal acetylcholine receptor subunit alpha-7 (502 aa).

The signal sequence occupies residues 1 to 23; sequence MGLRALMLWLLAAAGLVRESLQG. Over 24 to 233 the chain is Extracellular; it reads EFQRKLYKEL…VTMRRRTLYY (210 aa). Ca(2+) is bound by residues Arg-42 and Val-44. 3 N-linked (GlcNAc...) asparagine glycosylation sites follow: Asn-46, Asn-90, and Asn-133. Cys-150 and Cys-164 form a disulfide bridge. Residues Thr-172 and Tyr-210 each coordinate Ca(2+). Cys-212 and Cys-213 are oxidised to a cystine. The next 3 helical transmembrane spans lie at 234–254, 262–282, and 295–315; these read GLNL…VFLL, ISLG…VAEI, and QYFA…VIVL. At 316–469 the chain is on the cytoplasmic side; sequence QYHHHDPDGG…WKFAASVVDR (154 aa). A helical transmembrane segment spans residues 470 to 490; it reads LCLMAFSVFTIICTIGILMSA.

Belongs to the ligand-gated ion channel (TC 1.A.9) family. Acetylcholine receptor (TC 1.A.9.1) subfamily. Alpha-7/CHRNA7 sub-subfamily. Homopentamer. Can also form heteropentamers with CHRNB2, mainly found in basal forebrain cholinergic neurons.

The protein localises to the postsynaptic cell membrane. Its subcellular location is the cell membrane. The enzyme catalyses Ca(2+)(in) = Ca(2+)(out). It catalyses the reaction K(+)(in) = K(+)(out). The catalysed reaction is Na(+)(in) = Na(+)(out). It carries out the reaction choline(out) = choline(in). The enzyme catalyses NH4(+)(in) = NH4(+)(out). It catalyses the reaction L-arginine(in) = L-arginine(out). The catalysed reaction is guanidine(out) = guanidine(in). With respect to regulation, activated by a myriad of ligands such as acetylcholine, cytisine, nicotine, choline and epibatidine. Activity is modulated by positive allosteric modulators (PAMs), such as flavonoids, with a wide range of chemical diversity, pharmacological sensitivity and efficacy. AChR activity is inhibited by the antagonists alpha-conotoxons RgIA, ImI and ImII, small disulfide-constrained peptides from cone snails. Its function is as follows. Component of neuronal acetylcholine receptors (nAChRs) that function as pentameric, ligand-gated cation channels with high calcium permeability among other activities. nAChRs are excitatory neurotrasnmitter receptors formed by a collection of nAChR subunits known to mediate synaptic transmission in the nervous system and the neuromuscular junction. Each nAchR subunit confers differential attributes to channel properties, including activation, deactivation and desensitization kinetics, pH sensitivity, cation permeability, and binding to allosteric modulators. CHRNA7 is an homooligomeric neuronal acetylcholine receptor abundantly expressed in the central nervous system. Characterized by a fast desensitization and high calcium permeability. Also expressed in non-neuronal cells such as immune cells like lymphocytes, monocytes and macrophages. The chain is Neuronal acetylcholine receptor subunit alpha-7 (CHRNA7) from Gallus gallus (Chicken).